We begin with the raw amino-acid sequence, 251 residues long: Ubiquinone/menaquinone biosynthesis C-methyltransferase UbiE (251 aa).

S-adenosyl-L-methionine is bound by residues Thr-74, Asp-95, and 123–124; that span reads NA.

Belongs to the class I-like SAM-binding methyltransferase superfamily. MenG/UbiE family.

It carries out the reaction a 2-demethylmenaquinol + S-adenosyl-L-methionine = a menaquinol + S-adenosyl-L-homocysteine + H(+). It catalyses the reaction a 2-methoxy-6-(all-trans-polyprenyl)benzene-1,4-diol + S-adenosyl-L-methionine = a 5-methoxy-2-methyl-3-(all-trans-polyprenyl)benzene-1,4-diol + S-adenosyl-L-homocysteine + H(+). Its pathway is quinol/quinone metabolism; menaquinone biosynthesis; menaquinol from 1,4-dihydroxy-2-naphthoate: step 2/2. It participates in cofactor biosynthesis; ubiquinone biosynthesis. In terms of biological role, methyltransferase required for the conversion of demethylmenaquinol (DMKH2) to menaquinol (MKH2) and the conversion of 2-polyprenyl-6-methoxy-1,4-benzoquinol (DDMQH2) to 2-polyprenyl-3-methyl-6-methoxy-1,4-benzoquinol (DMQH2). The protein is Ubiquinone/menaquinone biosynthesis C-methyltransferase UbiE of Psychromonas ingrahamii (strain DSM 17664 / CCUG 51855 / 37).